Here is a 191-residue protein sequence, read N- to C-terminus: Adenylate kinase (191 aa).

11–16 is a binding site for ATP; that stretch reads GSGKGT. The tract at residues 31-60 is NMP; sequence STGEILRREIKDKTELGKIAEEYINQGQLL. AMP contacts are provided by residues T32, R37, 58 to 60, 86 to 89, and Q93; these read QLL and GFPR. The segment at 127-137 is LID; it reads KRGKLFSRKDD. An ATP-binding site is contributed by R128. Positions 134 and 145 each coordinate AMP. N173 contributes to the ATP binding site.

The protein belongs to the adenylate kinase family. In terms of assembly, monomer.

It localises to the cytoplasm. It carries out the reaction AMP + ATP = 2 ADP. It participates in purine metabolism; AMP biosynthesis via salvage pathway; AMP from ADP: step 1/1. In terms of biological role, catalyzes the reversible transfer of the terminal phosphate group between ATP and AMP. Plays an important role in cellular energy homeostasis and in adenine nucleotide metabolism. The sequence is that of Adenylate kinase from Azobacteroides pseudotrichonymphae genomovar. CFP2.